The chain runs to 311 residues: JNK1/MAPK8-associated membrane protein (311 aa).

Residues 1–57 (MAVDIQPACLGLYCGKTLLFKNGSTEIYGECGVCPRGQRTNAQKYCQPCTESPELYD) lie on the Lumenal side of the membrane. A glycan (N-linked (GlcNAc...) asparagine) is linked at Asn22. The chain crosses the membrane as a helical span at residues 58–78 (WLYLGFMAMLPLVLHWFFIEW). Over 79-87 (YSGKKSSSA) the chain is Cytoplasmic. A helical transmembrane segment spans residues 88 to 108 (LFQHITALFECSMAAIITLLV). Residues 109–149 (SDPVGVLYIRSCRVLMLSDWYTMLYNPSPDYVTTVHCTHEA) are Lumenal-facing. A helical transmembrane segment spans residues 150 to 170 (VYPLYTIVFIYYAFCLVLMML). Residues 171–188 (LRPLLVKKIACGLGKSDR) are Cytoplasmic-facing. The chain crosses the membrane as a helical span at residues 189–209 (FKSIYAALYFFPILTVLQAVG). Position 210 (Gly210) is a topological domain, lumenal. Residues 211–231 (GLLYYAFPYIILVLSLVTLAV) traverse the membrane as a helical segment. Over 232 to 250 (YMSASEIENCYDLLVRKKR) the chain is Cytoplasmic. The chain crosses the membrane as a helical span at residues 251–271 (LIVLFSHWLLHAYGIISISRV). At 272–277 (DKLEQD) the chain is on the lumenal side. Residues 278 to 298 (LPLLALVPTPALFYLFTAKFT) form a helical membrane-spanning segment. The Cytoplasmic portion of the chain corresponds to 299–311 (EPSRILSEGANGH).

As to quaternary structure, interacts with RNF5 and MAPK8, but not with MAPK9. Binding to MAPK8 occurs before and after exposure to stress, such as UV irradiation. After exposure to stress, interacts with phosphorylated MAPK8. Competes with DUSP10 for MAPK8 binding. Associates with multiple components of the proteasome and with ERAD regulatory proteins including AMFR/GP78, CANX, PSMC1, PSMC2, PSMC3/TBP1, PSMC5, PSMC6, PSMD8, SEC61-ALPHA and UFD1. Interacts with DERL1 (in the presence of misfolded protein CFTR(F508del)). Ubiquitinated by RNF5 via 'Lys-63'-linked ubiquitin linkage in a UBE2N-dependent manner. Ubiquitination decreases association with components of the proteasome and ERAD.

Its subcellular location is the endoplasmic reticulum membrane. Its function is as follows. Regulates the duration of MAPK8 activity in response to various stress stimuli. Facilitates degradation of misfolded endoplasmic reticulum (ER) proteins through the recruitment of components of the proteasome and endoplasmic reticulum-associated degradation (ERAD) system. The protein is JNK1/MAPK8-associated membrane protein (JKAMP) of Homo sapiens (Human).